The sequence spans 1039 residues: uncharacterized protein (1039 aa).

The segment covering 1-19 has biased composition (basic residues); that stretch reads MSLLMAHRKSKSSQRKLRN. Positions 1-38 are disordered; it reads MSLLMAHRKSKSSQRKLRNRSSSLTPQKRRIRASKGSH.

This is an uncharacterized protein from Sinorhizobium fredii (strain NBRC 101917 / NGR234).